A 54-amino-acid chain; its full sequence is Large ribosomal subunit protein bL33 (54 aa).

Belongs to the bacterial ribosomal protein bL33 family.

The sequence is that of Large ribosomal subunit protein bL33 from Corynebacterium jeikeium (strain K411).